The following is a 222-amino-acid chain: Collectrin (222 aa).

Residues 1–14 form the signal peptide; the sequence is MLWALFFLVTTIHA. Topologically, residues 15–141 are extracellular; the sequence is ELCHPDAENA…LAPPMEPSVP (127 aa). The Collectrin-like domain occupies 21–222; sequence AENAFKVRLS…LTEDERLTPL (202 aa). N-linked (GlcNAc...) asparagine glycosylation is found at Asn-76 and Asn-93. Residues 142–162 form a helical membrane-spanning segment; it reads VWIIVFGVIFCIVTVAIALLV. Residues 163–222 are Cytoplasmic-facing; sequence LSGIRQRRRNNKGPPGVEDAEDKCENIITIENGIPCDPLDMKGGHINDGFLTEDERLTPL. Phosphothreonine occurs at positions 214 and 220.

It belongs to the CLTRN family. As to quaternary structure, monomer. Homodimer. Homodimer; dimerization prevents CLTRN cleavage by BACE2. Interacts with SNAPIN. Interacts with SLC6A18; this interaction regulates the trafficking of SLC6A18 to the cell membrane and its amino acid transporter activity. Interacts with SLC6A19; this interaction regulates the trafficking of SLC6A19 to the cell membrane and its amino acid transporter activity. Interacts with SLC6A20B. In terms of processing, glycosylated. Glycosylation is required for plasma membrane localization and for its cleavage by BACE2. Post-translationally, proteolytically processed in pancreatic beta cells by BACE2 leading to the generation and extracellular release of soluble CLTRN, and a corresponding cell-associated C-terminal fragment which is later cleaved by gamma-secretase. This shedding process inactivates CLTRN. Three cleavage sites have been identified for BACE2, two clustered sites after Phe-116 and Leu-118 and a more membrane proximal site at Phe-125; the preferred BACE2 cleavage site seems to be between Phe-125 and Leu-126, Phe-116 and Leu-118 act as alternative sites. Expressed on the apical surface of the proximal tubules in the renal cortex (at protein level). Kidney; collecting ducts and proximal tubule. Pancreas; beta cells of islets. Expressed in the cerebral cortex, hippocampus, brainstem and cerebellum.

It is found in the cell membrane. In terms of biological role, plays an important role in amino acid transport by acting as binding partner of amino acid transporters SLC6A18 and SLC6A19, regulating their trafficking on the cell surface and their activity. May also play a role in trafficking of amino acid transporters SLC3A1 and SLC7A9 to the renal cortical cell membrane. Regulator of SNARE complex function. Stimulator of beta cell replication. In Mus musculus (Mouse), this protein is Collectrin.